Reading from the N-terminus, the 76-residue chain is Exodeoxyribonuclease 7 small subunit (76 aa).

It belongs to the XseB family. As to quaternary structure, heterooligomer composed of large and small subunits.

It localises to the cytoplasm. The catalysed reaction is Exonucleolytic cleavage in either 5'- to 3'- or 3'- to 5'-direction to yield nucleoside 5'-phosphates.. Its function is as follows. Bidirectionally degrades single-stranded DNA into large acid-insoluble oligonucleotides, which are then degraded further into small acid-soluble oligonucleotides. This Enterococcus faecalis (strain ATCC 700802 / V583) protein is Exodeoxyribonuclease 7 small subunit.